The chain runs to 51 residues: Large ribosomal subunit protein bL32c (51 aa).

It belongs to the bacterial ribosomal protein bL32 family.

It localises to the plastid. Its subcellular location is the chloroplast. The protein is Large ribosomal subunit protein bL32c of Oenothera elata subsp. hookeri (Hooker's evening primrose).